The sequence spans 421 residues: Probable pectate lyase C (421 aa).

A signal peptide spans 1-19 (MQPLHTLLALLPLCRSTTA). Residues N164 and N201 are each glycosylated (N-linked (GlcNAc...) asparagine). R204 is a catalytic residue. The region spanning 257–292 (NENFHGYVENNYYDPDQDGTLNGNELGVSSSNYGGM) is the EF-hand domain. Ca(2+)-binding residues include D270, D272, D274, T276, and E281. Positions 353–376 (DFGGVGDLDGGETPTDTDGDGIPD) are disordered. Over residues 367–376 (TDTDGDGIPD) the composition is skewed to acidic residues.

This sequence belongs to the polysaccharide lyase 1 family. It depends on Ca(2+) as a cofactor.

The protein localises to the secreted. The catalysed reaction is Eliminative cleavage of (1-&gt;4)-alpha-D-galacturonan to give oligosaccharides with 4-deoxy-alpha-D-galact-4-enuronosyl groups at their non-reducing ends.. Its function is as follows. Pectinolytic enzyme consist of four classes of enzymes: pectin lyase, polygalacturonase, pectin methylesterase and rhamnogalacturonase. Among pectinolytic enzymes, pectin lyase is the most important in depolymerization of pectin, since it cleaves internal glycosidic bonds of highly methylated pectins. Favors pectate, the anion, over pectin, the methyl ester. The chain is Probable pectate lyase C (plyC) from Emericella nidulans (strain FGSC A4 / ATCC 38163 / CBS 112.46 / NRRL 194 / M139) (Aspergillus nidulans).